Reading from the N-terminus, the 305-residue chain is Methionyl-tRNA formyltransferase (305 aa).

111–114 (SLLP) serves as a coordination point for (6S)-5,6,7,8-tetrahydrofolate.

The protein belongs to the Fmt family.

The catalysed reaction is L-methionyl-tRNA(fMet) + (6R)-10-formyltetrahydrofolate = N-formyl-L-methionyl-tRNA(fMet) + (6S)-5,6,7,8-tetrahydrofolate + H(+). Functionally, attaches a formyl group to the free amino group of methionyl-tRNA(fMet). The formyl group appears to play a dual role in the initiator identity of N-formylmethionyl-tRNA by promoting its recognition by IF2 and preventing the misappropriation of this tRNA by the elongation apparatus. This is Methionyl-tRNA formyltransferase from Campylobacter jejuni (strain RM1221).